Consider the following 231-residue polypeptide: Ribosomal RNA large subunit methyltransferase E (231 aa).

5 residues coordinate S-adenosyl-L-methionine: Gly-76, Trp-78, Asp-99, Asp-115, and Asp-139. The active-site Proton acceptor is the Lys-179.

It belongs to the class I-like SAM-binding methyltransferase superfamily. RNA methyltransferase RlmE family.

The protein localises to the cytoplasm. It carries out the reaction uridine(2552) in 23S rRNA + S-adenosyl-L-methionine = 2'-O-methyluridine(2552) in 23S rRNA + S-adenosyl-L-homocysteine + H(+). In terms of biological role, specifically methylates the uridine in position 2552 of 23S rRNA at the 2'-O position of the ribose in the fully assembled 50S ribosomal subunit. The protein is Ribosomal RNA large subunit methyltransferase E of Bradyrhizobium sp. (strain ORS 278).